The primary structure comprises 371 residues: Ferredoxin--NADP reductase, apicoplast (371 aa).

The N-terminal 18 residues, 1-18, are a transit peptide targeting the apicoplast; sequence MKIRFVFILSVLISGVCC. FAD-binding positions include K68, 155–159, 172–179, 192–194, and T235; these read ARLYS, AIKIHKYE, and YCS. Residues 68–218 enclose the FAD-binding FR-type domain; that stretch reads KNPLKCKIVD…TGAHGYFNLP (151 aa). An NADP(+)-binding site is contributed by K174. NADP(+)-binding positions include 272–273, S302, 313–315, and 341–343; these read VY, YVQ, and HKS. Residues K342 and Y371 each coordinate FAD.

The protein belongs to the ferredoxin--NADP reductase type 1 family. In terms of assembly, monomer. Homodimer; disulfide linked. NADP binding accelerates formation of an inactive, disulfide-linked homodimer when the protein is exposed to air for 24 hours or more (in vitro); the physiological relevance of this is uncertain. The cofactor is FAD.

The protein resides in the plastid. The protein localises to the apicoplast. The catalysed reaction is 2 reduced [2Fe-2S]-[ferredoxin] + NADP(+) + H(+) = 2 oxidized [2Fe-2S]-[ferredoxin] + NADPH. Its function is as follows. May play a role in the terminal step of the DOXP/MEP pathway for isoprenoid precursor biosynthesis. The protein is Ferredoxin--NADP reductase, apicoplast of Plasmodium falciparum (isolate 3D7).